Reading from the N-terminus, the 530-residue chain is NMDA receptor synaptonuclear signaling and neuronal migration factor (530 aa).

Residue glycine 2 is the site of N-myristoyl glycine attachment. Residues 2-233 (GAAASRRRAL…FSFQTATTTM (232 aa)) form a necessary and sufficient to elicit dendritic processes and synaptic contacts region. Disordered regions lie at residues 34-67 (SQSHPENRNGADHLLADAYSGHDGSPEMQPAPQN) and 125-197 (KGRR…GRRK). Over residues 38-48 (PENRNGADHLL) the composition is skewed to basic and acidic residues. Positions 125 to 137 (KGRRQRHPHHHSQ) are enriched in basic residues. A compositionally biased stretch (polar residues) spans 153 to 162 (PCQSWAGSRQ). A Phosphoserine modification is found at serine 204. The short motif at 247 to 250 (RRKR) is the Nuclear localization signal element. The interval 285 to 312 (RSFSRSWSDPTPMKADTSHDSRDSSDLQ) is disordered. Residues serine 290 and serine 292 each carry the phosphoserine modification. The segment covering 300-309 (DTSHDSRDSS) has biased composition (basic and acidic residues).

It belongs to the NSMF family. In terms of assembly, interacts with KPNA1; the interaction occurs in a calcium-independent manner after synaptic NMDA receptor stimulation and is required for nuclear import of NSMF but is competed by CABP1. Interacts (via the central NLS-containing motif region) with CABP1 (via EF-hands 1 and 2); the interaction occurs in a calcium-dependent manner after synaptic NMDA receptor stimulation and prevents the nuclear import of NSMF. Cannot be competed by calmodulin. In terms of processing, proteolytically processed after NMDA receptor activation. Cleaved in a calcium-dependent and calpain-sensitive manner. Calpain cleavage is essential for the translocation process from dendrites to the nucleus. Highly expressed in adult and fetal brain. Weakly expressed in heart, liver, spleen, testis, small intestine, skeletal muscle, peripheral white blood cells and kidney.

It is found in the nucleus. It localises to the nucleus envelope. The protein localises to the nucleus membrane. Its subcellular location is the nucleus matrix. The protein resides in the cytoplasm. It is found in the cell cortex. It localises to the cytoskeleton. The protein localises to the cell membrane. Its subcellular location is the cell projection. The protein resides in the dendrite. It is found in the synapse. It localises to the synaptosome. The protein localises to the postsynaptic density. Its subcellular location is the membrane. Its function is as follows. Couples NMDA-sensitive glutamate receptor signaling to the nucleus and triggers long-lasting changes in the cytoarchitecture of dendrites and spine synapse processes. Part of the cAMP response element-binding protein (CREB) shut-off signaling pathway. Stimulates outgrowth of olfactory axons and migration of gonadotropin-releasing hormone (GnRH) and luteinizing-hormone-releasing hormone (LHRH) neuronal cells. In Homo sapiens (Human), this protein is NMDA receptor synaptonuclear signaling and neuronal migration factor (NSMF).